The chain runs to 432 residues: Glutamate-1-semialdehyde 2,1-aminomutase 1 (432 aa).

The residue at position 268 (K268) is an N6-(pyridoxal phosphate)lysine.

Belongs to the class-III pyridoxal-phosphate-dependent aminotransferase family. HemL subfamily. As to quaternary structure, homodimer. Pyridoxal 5'-phosphate is required as a cofactor.

It is found in the cytoplasm. The enzyme catalyses (S)-4-amino-5-oxopentanoate = 5-aminolevulinate. It participates in porphyrin-containing compound metabolism; protoporphyrin-IX biosynthesis; 5-aminolevulinate from L-glutamyl-tRNA(Glu): step 2/2. In Bacillus cereus (strain B4264), this protein is Glutamate-1-semialdehyde 2,1-aminomutase 1.